A 391-amino-acid polypeptide reads, in one-letter code: 1-deoxy-D-xylulose 5-phosphate reductoisomerase (391 aa).

The NADPH site is built by Thr-17, Gly-18, Ser-19, Ile-20, Asn-47, and Asn-130. Lys-131 serves as a coordination point for 1-deoxy-D-xylulose 5-phosphate. NADPH is bound at residue Glu-132. Asp-156 contacts Mn(2+). 1-deoxy-D-xylulose 5-phosphate is bound by residues Ser-157, Glu-158, Ser-182, and His-205. Glu-158 serves as a coordination point for Mn(2+). Gly-211 provides a ligand contact to NADPH. 1-deoxy-D-xylulose 5-phosphate is bound by residues Ser-218, Asn-223, Lys-224, and Glu-227. Glu-227 contributes to the Mn(2+) binding site.

Belongs to the DXR family. Requires Mg(2+) as cofactor. The cofactor is Mn(2+).

The catalysed reaction is 2-C-methyl-D-erythritol 4-phosphate + NADP(+) = 1-deoxy-D-xylulose 5-phosphate + NADPH + H(+). It participates in isoprenoid biosynthesis; isopentenyl diphosphate biosynthesis via DXP pathway; isopentenyl diphosphate from 1-deoxy-D-xylulose 5-phosphate: step 1/6. In terms of biological role, catalyzes the NADPH-dependent rearrangement and reduction of 1-deoxy-D-xylulose-5-phosphate (DXP) to 2-C-methyl-D-erythritol 4-phosphate (MEP). This Sinorhizobium fredii (strain NBRC 101917 / NGR234) protein is 1-deoxy-D-xylulose 5-phosphate reductoisomerase.